Reading from the N-terminus, the 68-residue chain is Phosphatidylinositol N-acetylglucosaminyltransferase ERI1 subunit (68 aa).

2 helical membrane-spanning segments follow: residues 8–28 (FLVL…FYWL) and 34–54 (FLHY…WALI).

As to quaternary structure, component of the phosphatidylinositol N-acetylglucosaminyltransferase (GPI-GlcNAc transferase) complex composed of at least GPI1, GPI2, GPI3, GPI15, GPI19 and ERI1. Interacts with GPI2. Interacts with GTP-bound RAS2 in an effector loop-dependent manner.

It is found in the endoplasmic reticulum membrane. It participates in glycolipid biosynthesis; glycosylphosphatidylinositol-anchor biosynthesis. Functionally, probable component of the GPI-GlcNAc transferase (GPI-GnT) complex in the endoplasmic reticulum, a complex that catalyzes transfer of GlcNAc from UDP-GlcNAc to an acceptor phosphatidylinositol, the first step in the production of GPI-anchors for cell surface proteins. Ras may inhibit the enzyme activity of the GPI-GnT complex via the association between ERI1 and RAS2. In Saccharomyces cerevisiae (strain ATCC 204508 / S288c) (Baker's yeast), this protein is Phosphatidylinositol N-acetylglucosaminyltransferase ERI1 subunit (ERI1).